A 589-amino-acid polypeptide reads, in one-letter code: Putative phospholipase B-like 2 (589 aa).

The signal sequence occupies residues 1 to 41; that stretch reads MVAPMYGSPGGRLARAVTRALALALVLALLVGLFLSGLTGA. 2 N-linked (GlcNAc...) asparagine glycosylation sites follow: Asn-88 and Asn-110. A disulfide bond links Cys-142 and Cys-152. 4 N-linked (GlcNAc...) asparagine glycosylation sites follow: Asn-174, Asn-231, Asn-436, and Asn-465. Cys-492 and Cys-495 are disulfide-bonded. N-linked (GlcNAc...) asparagine glycosylation is present at Asn-515.

Belongs to the phospholipase B-like family. As to quaternary structure, interacts with IGF2R. Post-translationally, glycosylated; contains mannose 6-phosphate sugars.

Its subcellular location is the lysosome lumen. Functionally, putative phospholipase. The chain is Putative phospholipase B-like 2 (PLBD2) from Bos taurus (Bovine).